The primary structure comprises 337 residues: Cytoskeleton protein RodZ (337 aa).

Residues 1–111 (MNTEATHDQN…LGKRRKKRDG (111 aa)) are Cytoplasmic-facing. The HTH cro/C1-type domain occupies 19–71 (LRNAREQLGLSQQAVAERLCLKVSTVRDIEEDKAPADLASTFLRGYIRSYARL). A DNA-binding region (H-T-H motif) is located at residues 30-49 (QQAVAERLCLKVSTVRDIEE). Residues 112 to 132 (WLMTFTWLVLFVVIGLSGAWW) form a helical; Signal-anchor for type II membrane protein membrane-spanning segment. Topologically, residues 133 to 337 (WQDHKAQQEE…TLNAEQSPAQ (205 aa)) are periplasmic. Residues 145-167 (TMADQSSAELSSNSEQGQSVPLN) are compositionally biased toward polar residues. A disordered region spans residues 145–236 (TMADQSSAEL…TAATTPDGAA (92 aa)). The span at 168–207 (TSTTTDPATTSTPPASVDTTATNTQTPAVTAPAPAVDPQQ) shows a compositional bias: low complexity. A compositionally biased stretch (polar residues) spans 208-218 (NAVVSPSQANV). Residues 219-236 (DTAATPAPTAATTPDGAA) show a composition bias toward low complexity.

Belongs to the RodZ family.

It localises to the cell inner membrane. In terms of biological role, cytoskeletal protein that is involved in cell-shape control through regulation of the length of the long axis. This chain is Cytoskeleton protein RodZ, found in Escherichia coli O9:H4 (strain HS).